A 386-amino-acid polypeptide reads, in one-letter code: 8-amino-7-oxononanoate synthase (386 aa).

Residue R26 participates in substrate binding. 104 to 105 (GY) provides a ligand contact to pyridoxal 5'-phosphate. H129 contributes to the substrate binding site. Pyridoxal 5'-phosphate is bound by residues S176, H204, and T232. K235 carries the post-translational modification N6-(pyridoxal phosphate)lysine. T349 contacts substrate.

Belongs to the class-II pyridoxal-phosphate-dependent aminotransferase family. BioF subfamily. Homodimer. Requires pyridoxal 5'-phosphate as cofactor.

It carries out the reaction 6-carboxyhexanoyl-[ACP] + L-alanine + H(+) = (8S)-8-amino-7-oxononanoate + holo-[ACP] + CO2. Its pathway is cofactor biosynthesis; biotin biosynthesis. Catalyzes the decarboxylative condensation of pimeloyl-[acyl-carrier protein] and L-alanine to produce 8-amino-7-oxononanoate (AON), [acyl-carrier protein], and carbon dioxide. This chain is 8-amino-7-oxononanoate synthase, found in Chromohalobacter salexigens (strain ATCC BAA-138 / DSM 3043 / CIP 106854 / NCIMB 13768 / 1H11).